The primary structure comprises 370 residues: DNA replication and repair protein RecF (370 aa).

30–37 contributes to the ATP binding site; the sequence is GPNGSGKT.

Belongs to the RecF family.

The protein localises to the cytoplasm. In terms of biological role, the RecF protein is involved in DNA metabolism; it is required for DNA replication and normal SOS inducibility. RecF binds preferentially to single-stranded, linear DNA. It also seems to bind ATP. The sequence is that of DNA replication and repair protein RecF from Prosthecochloris aestuarii (strain DSM 271 / SK 413).